A 229-amino-acid polypeptide reads, in one-letter code: Uracil-DNA glycosylase (229 aa).

The active-site Proton acceptor is Asp67.

The protein belongs to the uracil-DNA glycosylase (UDG) superfamily. UNG family.

It is found in the cytoplasm. The enzyme catalyses Hydrolyzes single-stranded DNA or mismatched double-stranded DNA and polynucleotides, releasing free uracil.. Its function is as follows. Excises uracil residues from the DNA which can arise as a result of misincorporation of dUMP residues by DNA polymerase or due to deamination of cytosine. In Coxiella burnetii (strain CbuK_Q154) (Coxiella burnetii (strain Q154)), this protein is Uracil-DNA glycosylase.